A 100-amino-acid polypeptide reads, in one-letter code: MSKLFDSRLADVIRKPVITEKATNALDLNQYTFEVDHRAAKPQIKAAVEALFSVKVIGVNTMNPPRRTRRVGKFSGKRSQVKKAIVRLAEGDKIQLFPES.

Belongs to the universal ribosomal protein uL23 family. In terms of assembly, part of the 50S ribosomal subunit. Contacts protein L29, and trigger factor when it is bound to the ribosome.

Functionally, one of the early assembly proteins it binds 23S rRNA. One of the proteins that surrounds the polypeptide exit tunnel on the outside of the ribosome. Forms the main docking site for trigger factor binding to the ribosome. The sequence is that of Large ribosomal subunit protein uL23 from Prochlorococcus marinus (strain AS9601).